Reading from the N-terminus, the 74-residue chain is RNA-binding protein Hfq (74 aa).

The Sm domain maps to 9–69; it reads DQFLNQLRKE…ISTFAPQKNV (61 aa).

This sequence belongs to the Hfq family. Homohexamer.

In terms of biological role, RNA chaperone that binds small regulatory RNA (sRNAs) and mRNAs to facilitate mRNA translational regulation in response to envelope stress, environmental stress and changes in metabolite concentrations. Also binds with high specificity to tRNAs. In Anoxybacillus flavithermus (strain DSM 21510 / WK1), this protein is RNA-binding protein Hfq.